A 492-amino-acid polypeptide reads, in one-letter code: Probable small intestine urate exporter (492 aa).

A disordered region spans residues 1 to 20 (MSTGADLKAREGDIPSDNMT). N-linked (GlcNAc...) asparagine glycans are attached at residues Asn-18, Asn-44, Asn-53, Asn-63, Asn-72, and Asn-87. 11 consecutive transmembrane segments (helical) span residues 112–132 (LSYG…VFGA), 134–154 (YVVG…PLAA), 156–176 (AGVA…VMVL), 198–218 (IAAS…GLIC), 225–245 (YIFY…FPLV), 287–307 (LPLW…STVM), 327–347 (ILSA…GLLA), 363–383 (KLFT…LPWV), 393–413 (FLVL…INFL), 426–446 (LLQV…GFFI), and 456–476 (NVFF…LIFS).

It belongs to the major facilitator superfamily. Sodium/anion cotransporter family. As to expression, expressed in the small intestine (at protein level).

It is found in the apical cell membrane. It carries out the reaction 3 Na(+)(out) + phosphate(out) = 3 Na(+)(in) + phosphate(in). The enzyme catalyses urate(out) + n chloride(in) = urate(in) + n chloride(out). The catalysed reaction is L-thyroxine(out) = L-thyroxine(in). It catalyses the reaction 3,3',5-triiodo-L-thyronine(out) = 3,3',5-triiodo-L-thyronine(in). Acts as a membrane potential-dependent organic anion transporter, the transport requires a low concentration of chloride ions. Mediates chloride-dependent transport of urate. Mediates sodium-independent high affinity transport of thyroid hormones including L-thyroxine (T4) and 3,3',5-triiodo-L-thyronine (T3). Can actively transport inorganic phosphate into cells via Na(+) cotransport. The protein is Probable small intestine urate exporter (Slc17a4) of Mus musculus (Mouse).